A 307-amino-acid polypeptide reads, in one-letter code: Epimerase family protein ML0860 (307 aa).

Belongs to the NAD(P)-dependent epimerase/dehydratase family. SDR39U1 subfamily.

This Mycobacterium leprae (strain TN) protein is Epimerase family protein ML0860.